Here is a 495-residue protein sequence, read N- to C-terminus: Phenylalanine--tRNA ligase alpha subunit (495 aa).

Residues T338, 377–379 (QLE), and Y417 each bind L-phenylalanine. E419 lines the Mg(2+) pocket. F442 is a binding site for L-phenylalanine.

It belongs to the class-II aminoacyl-tRNA synthetase family. Phe-tRNA synthetase alpha subunit type 2 subfamily. Tetramer of two alpha and two beta subunits. The cofactor is Mg(2+).

Its subcellular location is the cytoplasm. It carries out the reaction tRNA(Phe) + L-phenylalanine + ATP = L-phenylalanyl-tRNA(Phe) + AMP + diphosphate + H(+). In Methanosarcina mazei (strain ATCC BAA-159 / DSM 3647 / Goe1 / Go1 / JCM 11833 / OCM 88) (Methanosarcina frisia), this protein is Phenylalanine--tRNA ligase alpha subunit.